The chain runs to 58 residues: Large ribosomal subunit protein uL30 (58 aa).

It belongs to the universal ribosomal protein uL30 family. In terms of assembly, part of the 50S ribosomal subunit.

The chain is Large ribosomal subunit protein uL30 from Azotobacter vinelandii (strain DJ / ATCC BAA-1303).